Reading from the N-terminus, the 1280-residue chain is E3 ubiquitin-protein ligase RKP (1280 aa).

The 188-residue stretch at 82–269 (KLHGDLDVSV…CELNFGAYPF (188 aa)) folds into the B30.2/SPRY domain. A helical transmembrane segment spans residues 551-571 (SVLVSLFSVILHFLSEGFAML). Residues 669–719 (DRGKNTAQSSRGRCSSIPERSSHVAAECSAGSFSEEIDDKPSTSNQSDPDF) form a disordered region. The helical transmembrane segment at 834 to 854 (ALCMWVVQLLLVLSKMDSVFV) threads the bilayer. The segment at 1217-1252 (CCICYAGEANAMIAPCSHRSCYGCITRHLLNCQRCF) adopts an RING-type zinc-finger fold.

The protein localises to the membrane. It carries out the reaction S-ubiquitinyl-[E2 ubiquitin-conjugating enzyme]-L-cysteine + [acceptor protein]-L-lysine = [E2 ubiquitin-conjugating enzyme]-L-cysteine + N(6)-ubiquitinyl-[acceptor protein]-L-lysine.. Functionally, E3 ubiquitin-protein ligase that promotes the ubiquitination and proteasomal degradation of KRP1 and KRP2. The polypeptide is E3 ubiquitin-protein ligase RKP (RKP) (Arabidopsis thaliana (Mouse-ear cress)).